We begin with the raw amino-acid sequence, 371 residues long: MILVSTTSAVPGALSSPSSPSNSSQEELLDDRDPLLVRAELALLSTIFVAVALSNGLVLGALIRRGRRGRWAPMHVFISHLCLADLAVALFQVLPQLAWDATDRFHGPDALCRAVKYLQMVGMYASSYMILAMTLDRHRAICRPMLAYRHGGGARWNRPVLVAWAFSLLLSLPQLFIFAQRDVGNGSGVFDCWARFAEPWGLRAYVTWIALMVFVAPALGIAACQVLIFREIHASLVPGPSERAGRRRRGHRTGSPSEGAHVSAAMAKTVRMTLVIVIVYVLCWAPFFLVQLWAAWDPEAPLERPPFVLLMLLASLNSCTNPWIYASFSSSVSSELRSLLCCAQRHTTHSLGPQDESCATASSSLMKDTPS.

Positions 1 to 27 (MILVSTTSAVPGALSSPSSPSNSSQEE) are disordered. Residues 1 to 38 (MILVSTTSAVPGALSSPSSPSNSSQEELLDDRDPLLVR) lie on the Extracellular side of the membrane. The segment covering 15 to 24 (SSPSSPSNSS) has biased composition (low complexity). N22 carries N-linked (GlcNAc...) asparagine glycosylation. A helical transmembrane segment spans residues 39–63 (AELALLSTIFVAVALSNGLVLGALI). Residues 64 to 77 (RRGRRGRWAPMHVF) lie on the Cytoplasmic side of the membrane. Residues 78 to 98 (ISHLCLADLAVALFQVLPQLA) traverse the membrane as a helical segment. Residues 99-113 (WDATDRFHGPDALCR) are Extracellular-facing. The helical transmembrane segment at 114 to 135 (AVKYLQMVGMYASSYMILAMTL) threads the bilayer. Residues 136-159 (DRHRAICRPMLAYRHGGGARWNRP) are Cytoplasmic-facing. Residues 160 to 180 (VLVAWAFSLLLSLPQLFIFAQ) traverse the membrane as a helical segment. The Extracellular portion of the chain corresponds to 181 to 200 (RDVGNGSGVFDCWARFAEPW). An N-linked (GlcNAc...) asparagine glycan is attached at N185. The helical transmembrane segment at 201–220 (GLRAYVTWIALMVFVAPALG) threads the bilayer. The Cytoplasmic segment spans residues 221-271 (IAACQVLIFREIHASLVPGPSERAGRRRRGHRTGSPSEGAHVSAAMAKTVR). The tract at residues 240–259 (PSERAGRRRRGHRTGSPSEG) is disordered. A helical membrane pass occupies residues 272–293 (MTLVIVIVYVLCWAPFFLVQLW). The Extracellular segment spans residues 294 to 308 (AAWDPEAPLERPPFV). A helical membrane pass occupies residues 309–328 (LLMLLASLNSCTNPWIYASF). Topologically, residues 329–371 (SSSVSSELRSLLCCAQRHTTHSLGPQDESCATASSSLMKDTPS) are cytoplasmic. 2 S-palmitoyl cysteine lipidation sites follow: C341 and C342. The segment at 349–371 (HSLGPQDESCATASSSLMKDTPS) is disordered. Residues 357 to 371 (SCATASSSLMKDTPS) show a composition bias toward polar residues.

The protein belongs to the G-protein coupled receptor 1 family. Vasopressin/oxytocin receptor subfamily. As to quaternary structure, interacts with ARRDC4. Identified in a complex containing at least ARRDC4, V2R and HGS. Interacts with TMEM147. In terms of tissue distribution, highly expressed in kidney (at protein level) and moderately expressed in liver (at protein level). No or extremely low expression in left ventricule, muscle, bone and brain (at protein level).

Its subcellular location is the cell membrane. Receptor for arginine vasopressin. The activity of this receptor is mediated by G proteins which activate adenylate cyclase. Involved in renal water reabsorption. This Mus musculus (Mouse) protein is Vasopressin V2 receptor (Avpr2).